Consider the following 508-residue polypeptide: ATP synthase subunit alpha, mitochondrial (508 aa).

Residue 171–178 coordinates ATP; that stretch reads GDRQTGKT.

It belongs to the ATPase alpha/beta chains family. As to quaternary structure, F-type ATPases have 2 components, CF(1) - the catalytic core - and CF(0) - the membrane proton channel. CF(1) has five subunits: alpha(3), beta(3), gamma(1), delta(1), epsilon(1). CF(0) has three main subunits: a, b and c.

The protein localises to the mitochondrion. It localises to the mitochondrion inner membrane. Mitochondrial membrane ATP synthase (F(1)F(0) ATP synthase or Complex V) produces ATP from ADP in the presence of a proton gradient across the membrane which is generated by electron transport complexes of the respiratory chain. F-type ATPases consist of two structural domains, F(1) - containing the extramembraneous catalytic core, and F(0) - containing the membrane proton channel, linked together by a central stalk and a peripheral stalk. During catalysis, ATP synthesis in the catalytic domain of F(1) is coupled via a rotary mechanism of the central stalk subunits to proton translocation. Subunits alpha and beta form the catalytic core in F(1). Rotation of the central stalk against the surrounding alpha(3)beta(3) subunits leads to hydrolysis of ATP in three separate catalytic sites on the beta subunits. Subunit alpha does not bear the catalytic high-affinity ATP-binding sites. The protein is ATP synthase subunit alpha, mitochondrial (ATPA) of Phaseolus vulgaris (Kidney bean).